A 423-amino-acid polypeptide reads, in one-letter code: Pseudouridylate synthase 1 homolog (423 aa).

Residues 32-75 (AGNKVPPALASHQPDRKGRGGWVWEETEHPAKRVKGGEDEEPPR) form a disordered region. Over residues 57–68 (ETEHPAKRVKGG) the composition is skewed to basic and acidic residues. The Nucleophile role is filled by D142. The interval 403 to 423 (ADTGAKVPSSLEGSEGDGDTD) is disordered. 2 positions are modified to phosphoserine: S411 and S416. T422 bears the Phosphothreonine mark.

This sequence belongs to the tRNA pseudouridine synthase TruA family. As to quaternary structure, monomer. Forms a complex with RARG and the SRA1 RNA in the nucleus.

It localises to the nucleus. It is found in the cytoplasm. The protein resides in the mitochondrion. It carries out the reaction a uridine in tRNA = a pseudouridine in tRNA. It catalyses the reaction uridine(38/39/40) in tRNA = pseudouridine(38/39/40) in tRNA. The catalysed reaction is a uridine in mRNA = a pseudouridine in mRNA. Functionally, pseudouridylate synthase that catalyzes pseudouridylation of tRNAs and mRNAs. Acts on positions 27/28 in the anticodon stem and also positions 34 and 36 in the anticodon of an intron containing tRNA. Also catalyzes pseudouridylation of mRNAs: mediates pseudouridylation of mRNAs with the consensus sequence 5'-UGUAG-3'. Acts as a regulator of pre-mRNA splicing by mediating pseudouridylation of pre-mRNAs at locations associated with alternatively spliced regions. Pseudouridylation of pre-mRNAs near splice sites directly regulates mRNA splicing and mRNA 3'-end processing. Involved in regulation of nuclear receptor activity through pseudouridylation of SRA1 mRNA. Its function is as follows. Does not form pseudouridine when expressed in vitro. The protein is Pseudouridylate synthase 1 homolog of Mus musculus (Mouse).